Reading from the N-terminus, the 718-residue chain is DNA ligase (718 aa).

Residues Asp44–Asp48, Ser93–Leu94, and Glu127 each bind NAD(+). Lys129 functions as the N6-AMP-lysine intermediate in the catalytic mechanism. NAD(+) is bound by residues Arg150, Glu186, Lys302, and Lys326. Zn(2+) is bound by residues Cys432, Cys435, Cys456, and Cys462. Residues Thr640–Gly718 form the BRCT domain.

It belongs to the NAD-dependent DNA ligase family. LigA subfamily. Requires Mg(2+) as cofactor. It depends on Mn(2+) as a cofactor.

The enzyme catalyses NAD(+) + (deoxyribonucleotide)n-3'-hydroxyl + 5'-phospho-(deoxyribonucleotide)m = (deoxyribonucleotide)n+m + AMP + beta-nicotinamide D-nucleotide.. Its function is as follows. DNA ligase that catalyzes the formation of phosphodiester linkages between 5'-phosphoryl and 3'-hydroxyl groups in double-stranded DNA using NAD as a coenzyme and as the energy source for the reaction. It is essential for DNA replication and repair of damaged DNA. The protein is DNA ligase of Rhizobium etli (strain ATCC 51251 / DSM 11541 / JCM 21823 / NBRC 15573 / CFN 42).